Consider the following 1077-residue polypeptide: Histone deacetylase 4 (1077 aa).

The stretch at 66-169 forms a coiled coil; the sequence is REQQLQQELL…GKESAVASTE (104 aa). The tract at residues 117-312 is interaction with MEF2A; that stretch reads MLAMKHQQEL…NSSSGNVSTE (196 aa). Over residues 132 to 162 the composition is skewed to basic and acidic residues; sequence KLERHRQEQELEKQHREQKLQQLKNKEKGKE. 3 disordered regions span residues 132–167, 204–225, and 239–327; these read KLERHRQEQELEKQHREQKLQQLKNKEKGKESAVAS, KTQHSSLDQSSPPQSGVSASYN, and PLRK…AETS. A compositionally biased stretch (polar residues) spans 205–224; that stretch reads TQHSSLDQSSPPQSGVSASY. Ser209 bears the Phosphoserine mark. Residue Ser245 is modified to Phosphoserine; by CaMK4 and SIK1. A compositionally biased stretch (basic and acidic residues) spans 258 to 273; the sequence is KVAERRSSPLLRRKDG. The span at 289–310 shows a compositional bias: low complexity; it reads SACSSAPGSGPSSPNSSSGNVS. The PxLPxI/L motif; mediates interaction with ANKRA2 and 14-3-3 proteins motif lies at 348–353; the sequence is PSLPNI. At Ser349 the chain carries Phosphoserine. Position 466 is a phosphoserine; by CaMK4 and SIK1 (Ser466). Disordered stretches follow at residues 508–530, 542–582, and 623–646; these read SKPSEPPRQPESHPEETEEELRE, RLPG…RPAT, and RPLSRAQSSPASATFPMSVQEPPT. Basic and acidic residues predominate over residues 515–530; sequence RQPESHPEETEEELRE. Lys557 is covalently cross-linked (Glycyl lysine isopeptide (Lys-Gly) (interchain with G-Cter in SUMO)). Ser563, Ser630, and Ser631 each carry phosphoserine. Over residues 627 to 639 the composition is skewed to polar residues; that stretch reads RAQSSPASATFPM. Residues 653 to 1077 form a histone deacetylase region; the sequence is GLVYDTLMLK…EEPMEEEPPL (425 aa). Zn(2+) contacts are provided by Cys665, Cys667, His673, and Cys744. The active site involves His796. The Nuclear export signal signature appears at 1044–1077; sequence EEAETVTAMASLSVGVKPAEKRSEEEPMEEEPPL. The segment at 1052-1077 is disordered; it reads MASLSVGVKPAEKRSEEEPMEEEPPL.

Belongs to the histone deacetylase family. HD type 2 subfamily. Homodimer. Homodimerization via its N-terminal domain. Interacts with HDAC7. Interacts with MEF2A, MEF2C, MEF2D, MORC2 and NR2C1. Interacts with a 14-3-3 chaperone proteins in a phosphorylation dependent manner. Interacts with 14-3-3 protein YWHAB. Interacts with KDM5B and AHRR. Interacts with BTBD14B. Interacts with MYOCD. Interacts (via PxLPxI/L motif) with ANKRA2 (via ankyrin repeats). Interacts with CUL7 (as part of the 3M complex); negatively regulated by ANKRA2. Interacts with EP300 in the presence of TFAP2C. Interacts with HSPA1A and HSPA1B leading to their deacetylation at 'Lys-77'. Interacts with ZBTB7B; the interaction allows the recruitment of HDAC4 on CD8 loci for deacetylation and possible inhibition of CD8 genes expression. Interacts with DHX36. Interacts with SIK3; this interaction leads to HDAC4 retention in the cytoplasm. In terms of processing, phosphorylated by CaMK4 at Ser-245, Ser-466 and Ser-630. Phosphorylation at other residues by CaMK2D is required for the interaction with 14-3-3. Phosphorylation at Ser-349, within the PxLPxI/L motif, impairs the binding of ANKRA2 but generates a high-affinity docking site for 14-3-3. Post-translationally, sumoylation on Lys-557 is promoted by the E3 SUMO-protein ligase RANBP2, and prevented by phosphorylation by CaMK4.

It localises to the nucleus. The protein localises to the cytoplasm. The catalysed reaction is N(6)-acetyl-L-lysyl-[histone] + H2O = L-lysyl-[histone] + acetate. Its function is as follows. Responsible for the deacetylation of lysine residues on the N-terminal part of the core histones (H2A, H2B, H3 and H4). Histone deacetylation gives a tag for epigenetic repression and plays an important role in transcriptional regulation, cell cycle progression and developmental events. Histone deacetylases act via the formation of large multiprotein complexes. Involved in muscle maturation via its interaction with the myocyte enhancer factors such as MEF2A, MEF2C and MEF2D. Deacetylates HSPA1A and HSPA1B at 'Lys-77' leading to their preferential binding to co-chaperone STUB1. In Rattus norvegicus (Rat), this protein is Histone deacetylase 4 (Hdac4).